A 296-amino-acid chain; its full sequence is Cytidine deaminase (296 aa).

CMP/dCMP-type deaminase domains lie at 52 to 167 (SPVE…YLPD) and 191 to 296 (QGHD…YISL). Substrate is bound at residue 93–95 (NQE). His106 lines the Zn(2+) pocket. The active-site Proton donor is the Glu108. Zn(2+) is bound by residues Cys133 and Cys136.

The protein belongs to the cytidine and deoxycytidylate deaminase family. Homodimer. Zn(2+) serves as cofactor.

The enzyme catalyses cytidine + H2O + H(+) = uridine + NH4(+). It catalyses the reaction 2'-deoxycytidine + H2O + H(+) = 2'-deoxyuridine + NH4(+). Its function is as follows. This enzyme scavenges exogenous and endogenous cytidine and 2'-deoxycytidine for UMP synthesis. In Mannheimia succiniciproducens (strain KCTC 0769BP / MBEL55E), this protein is Cytidine deaminase.